The primary structure comprises 949 residues: Sensor histidine kinase RcsC (949 aa).

At 1-19 (MKYLASFRTTLKASRYMFR) the chain is on the cytoplasmic side. A helical membrane pass occupies residues 20–41 (ALALVLWLLIAFSSVFYIVNAL). Residues 42–313 (HQRESEIRQE…PVDKVLERIR (272 aa)) lie on the Periplasmic side of the membrane. A helical transmembrane segment spans residues 314-335 (MLILNAILLNVLAGAALFTLAR). Residues 336–949 (MYERRIFIPA…AERVRKSRDS (614 aa)) lie on the Cytoplasmic side of the membrane. In terms of domain architecture, PAS spans 357-425 (QFNRKIVASA…VLTSNNTNLQ (69 aa)). In terms of domain architecture, Histidine kinase spans 476–692 (TVSHELRTPL…QFTVRIPLYG (217 aa)). Phosphohistidine; by autocatalysis is present on histidine 479. The 101-residue stretch at 705–805 (SGKRCWLAVR…ARIYLIEMES (101 aa)) folds into the ABL domain. The Response regulatory domain occupies 826–940 (MILVVDDHPI…VIKQTLTLYA (115 aa)). Aspartate 875 is modified (4-aspartylphosphate).

This sequence belongs to the RcsC family. In terms of assembly, interacts with RcsD. Autophosphorylated. Activation probably requires a transfer of a phosphate group from a His in the transmitter domain to an Asp in the receiver domain.

The protein resides in the cell inner membrane. It catalyses the reaction ATP + protein L-histidine = ADP + protein N-phospho-L-histidine.. With respect to regulation, the Rcs phosphorelay may be activated by RcsF. DjlA, LolA and OmpG might act as a regulator of the phosphorelay. Activity is probably up-regulated by YmgA/AriR, and possibly down-regulated by YcgZ, all 3 are connector proteins providing additional signal input into signaling system. In terms of biological role, component of the Rcs signaling system, which controls transcription of numerous genes. RcsC functions as a membrane-associated protein kinase that phosphorylates RcsD in response to environmental signals. The phosphoryl group is then transferred to the response regulator RcsB. RcsC also has phosphatase activity. The system controls expression of genes involved in colanic acid capsule synthesis, biofilm formation and cell division. The protein is Sensor histidine kinase RcsC of Escherichia coli (strain K12).